We begin with the raw amino-acid sequence, 956 residues long: MENVRFSIIENDLKWNSESDPTADVDLLLDKRSISSEANSAGVFSDEAHEIFARQQQNQILWDLDEVKETLTESPGGKHVVDMVQSGCFLELMTDSADCNLALICCSVFGSVENTLFLLKHYNADPNVADSRGRTPLHFACCRANAPIAKVLLDFGADPNRWDARKEVTSLHCAASSKSVECILLLLRRKASINIGIEKRSALHYAIDVNAVDCVEILLKYGADPNTPQVYTETPLHTASAAGFAKCVQLLLSHNADVRSQFGEGKVTALHLAAENDYVECARLLLEHRAEVDCRNASHQTPLHLACLSQSIGTVDLLISYGANVNAVYRDGRTALHAAIVKQSRSLDCCNALLKAGADVNKADNYGYTPLHIAALNEFSSCVYTFIEHGADITARTDGRVSALSFIVRRTPEIIPKLMQKLDSSIKANDQEIGDVDCQIKLDFRLLVPSSSMDRGETELLLSLIEVGQKRILMHPLCETFLFLKWRRIRKFFLMSLAYHTLFVILFTFYVIWVYVRCCKKEELCVAPGYVSTIGYLVIILNLILLGKEVFQMAHGLRGYAKYWENWLQWTIGTGVLLCVTPETVRTDDLTAVPVWQHHVAAIVILLVWLELMMLVGRFPIFGVYVQMFTKVAVNFAKFLLAYICLLVAFGLSFAVLFNDYPAFENITWSFLKSITMMSGELEFEDIFYGDYAVKFPVTAHIIFLSFVLLVTVILTNLMVGLAVSDIQGLQVSATLDRLVRQAELVSRLESLFFSRLLRSAPTNLIQLCKRSALLRTSRDKLQFTIRPNDPRDNQLPEDIKLNVYKLVAERRDRNQSLRRRQFENNYNIFSRSLQRQQQPLHTDFLKPEPATGTTKKTPQNLFHMHELLRPRSATNVPQQFRQEAEGTVQMKNQANVLSAVLAEVQAIKTQLVDLVAKFERFSENATRKLNYSTDELCRLRQQGQSVASSHIRRHR.

Topologically, residues 1–491 are cytoplasmic; it reads MENVRFSIIE…LFLKWRRIRK (491 aa). ANK repeat units lie at residues 132–161, 166–195, 198–227, 231–260, 265–294, 298–327, 331–362, and 366–395; these read RGRT…DPNR, KEVT…SINI, EKRS…DPNT, YTET…DVRS, GKVT…EVDC, SHQT…NVNA, DGRT…DVNK, and YGYT…DITA. A helical membrane pass occupies residues 492–512; sequence FFLMSLAYHTLFVILFTFYVI. Residues 513–525 lie on the Extracellular side of the membrane; sequence WVYVRCCKKEELC. A helical transmembrane segment spans residues 526 to 546; the sequence is VAPGYVSTIGYLVIILNLILL. Topologically, residues 547-565 are cytoplasmic; sequence GKEVFQMAHGLRGYAKYWE. A helical membrane pass occupies residues 566-584; sequence NWLQWTIGTGVLLCVTPET. Topologically, residues 585-601 are extracellular; sequence VRTDDLTAVPVWQHHVA. A helical membrane pass occupies residues 602-622; that stretch reads AIVILLVWLELMMLVGRFPIF. Over 623–638 the chain is Cytoplasmic; that stretch reads GVYVQMFTKVAVNFAK. The chain crosses the membrane as a helical span at residues 639–659; that stretch reads FLLAYICLLVAFGLSFAVLFN. The Extracellular segment spans residues 660 to 701; sequence DYPAFENITWSFLKSITMMSGELEFEDIFYGDYAVKFPVTAH. Residue Asn666 is glycosylated (N-linked (GlcNAc...) asparagine). Residues 702–722 form a helical membrane-spanning segment; the sequence is IIFLSFVLLVTVILTNLMVGL. The Cytoplasmic segment spans residues 723–956; that stretch reads AVSDIQGLQV…VASSHIRRHR (234 aa).

The protein belongs to the transient receptor (TC 1.A.4) family. STrpC subfamily. Homooligomer; between isoform A and isoform B. In terms of tissue distribution, expressed in various peripheral nerves and the central nerves in embryos. In adults, it is expressed in sensory neurons lying beneath the bristles around eyes, neurons innervating the bristles on the back of thorax and neurons in maxillary palps, proboscis and antennae. Expressed in multidendritic neurons, which mediate temperature sensing, as well as non-multidendritic neurons in larval epidermis. Localizes ubiquitously throughout neurites.

The protein resides in the membrane. Receptor-activated non-selective cation channel involved in protection or tolerance from high temperature stress. Activated by temperatures above 40 degrees Celsius. More permeable to K(+) than to Na(+). May act in stress protection allow flies to survive in natural environments. The sequence is that of Transient receptor potential channel pyrexia (pyx) from Drosophila melanogaster (Fruit fly).